Consider the following 196-residue polypeptide: ATP-dependent Clp protease proteolytic subunit (196 aa).

S96 (nucleophile) is an active-site residue. H121 is a catalytic residue.

Belongs to the peptidase S14 family. As to quaternary structure, fourteen ClpP subunits assemble into 2 heptameric rings which stack back to back to give a disk-like structure with a central cavity, resembling the structure of eukaryotic proteasomes.

The protein localises to the cytoplasm. The catalysed reaction is Hydrolysis of proteins to small peptides in the presence of ATP and magnesium. alpha-casein is the usual test substrate. In the absence of ATP, only oligopeptides shorter than five residues are hydrolyzed (such as succinyl-Leu-Tyr-|-NHMec, and Leu-Tyr-Leu-|-Tyr-Trp, in which cleavage of the -Tyr-|-Leu- and -Tyr-|-Trp bonds also occurs).. In terms of biological role, cleaves peptides in various proteins in a process that requires ATP hydrolysis. Has a chymotrypsin-like activity. Plays a major role in the degradation of misfolded proteins. This Streptococcus suis (strain 98HAH33) protein is ATP-dependent Clp protease proteolytic subunit.